The following is a 201-amino-acid chain: uncharacterized protein (201 aa).

The N-terminal stretch at methionine 1–glycine 19 is a signal peptide.

This is an uncharacterized protein from Acheta domesticus (House cricket).